A 511-amino-acid chain; its full sequence is Coatomer subunit delta (511 aa).

Positions 167–177 (QQARRDAERQG) are enriched in basic and acidic residues. Residues 167–188 (QQARRDAERQGKKAPGFGGFGS) are disordered. Serine 223 is subject to Phosphoserine. 2 positions are modified to N6-acetyllysine: lysine 233 and lysine 241. Serine 244 is modified (phosphoserine). Residues 271–511 (MESVHMKIEE…TFLVDKYEIL (241 aa)) form the MHD domain. Residues lysine 309 and lysine 351 each carry the N6-acetyllysine modification. Serine 493 is subject to Phosphoserine.

Belongs to the adaptor complexes medium subunit family. Delta-COP subfamily. In terms of assembly, oligomeric complex that consists of at least the alpha, beta, beta', gamma, delta, epsilon and zeta subunits.

It localises to the cytoplasm. It is found in the golgi apparatus membrane. The protein resides in the cytoplasmic vesicle. The protein localises to the COPI-coated vesicle membrane. In terms of biological role, the coatomer is a cytosolic protein complex that binds to dilysine motifs and reversibly associates with Golgi non-clathrin-coated vesicles, which further mediate biosynthetic protein transport from the ER, via the Golgi up to the trans Golgi network. Coatomer complex is required for budding from Golgi membranes, and is essential for the retrograde Golgi-to-ER transport of dilysine-tagged proteins. In mammals, the coatomer can only be recruited by membranes associated to ADP-ribosylation factors (ARFs), which are small GTP-binding proteins; the complex also influences the Golgi structural integrity, as well as the processing, activity, and endocytic recycling of LDL receptors. The protein is Coatomer subunit delta (ARCN1) of Pongo abelii (Sumatran orangutan).